Reading from the N-terminus, the 389-residue chain is Phospho-N-acetylmuramoyl-pentapeptide-transferase (389 aa).

A run of 10 helical transmembrane segments spans residues 25–45, 73–93, 97–117, 135–155, 190–210, 222–242, 259–279, 287–307, 311–331, and 366–386; these read RAVM…PAVI, TMGG…WADL, FIWI…VDDY, FWQS…VSEA, ISYP…IVGA, GLVI…AYVM, AGEL…FLWF, FMGD…AVIV, IVLF…MLQV, and QVVV…LSTL.

It belongs to the glycosyltransferase 4 family. MraY subfamily. Mg(2+) serves as cofactor.

It localises to the cell inner membrane. It carries out the reaction UDP-N-acetyl-alpha-D-muramoyl-L-alanyl-gamma-D-glutamyl-meso-2,6-diaminopimeloyl-D-alanyl-D-alanine + di-trans,octa-cis-undecaprenyl phosphate = di-trans,octa-cis-undecaprenyl diphospho-N-acetyl-alpha-D-muramoyl-L-alanyl-D-glutamyl-meso-2,6-diaminopimeloyl-D-alanyl-D-alanine + UMP. It participates in cell wall biogenesis; peptidoglycan biosynthesis. In terms of biological role, catalyzes the initial step of the lipid cycle reactions in the biosynthesis of the cell wall peptidoglycan: transfers peptidoglycan precursor phospho-MurNAc-pentapeptide from UDP-MurNAc-pentapeptide onto the lipid carrier undecaprenyl phosphate, yielding undecaprenyl-pyrophosphoryl-MurNAc-pentapeptide, known as lipid I. The chain is Phospho-N-acetylmuramoyl-pentapeptide-transferase from Paraburkholderia phytofirmans (strain DSM 17436 / LMG 22146 / PsJN) (Burkholderia phytofirmans).